We begin with the raw amino-acid sequence, 402 residues long: Omega-3 fatty acid desaturase fat-1 (402 aa).

The next 4 membrane-spanning stretches (helical) occupy residues 79–99 (LVQD…FEYF), 101–121 (LFGY…LFVV), 235–255 (CVIS…IAGS), and 260–280 (FWYY…VTYL).

The protein belongs to the fatty acid desaturase type 1 family.

The protein localises to the membrane. The catalysed reaction is (9Z,12Z)-octadecadienoyl-CoA + 2 Fe(II)-[cytochrome b5] + O2 + 2 H(+) = (9Z,12Z,15Z)-octadecatrienoyl-CoA + 2 Fe(III)-[cytochrome b5] + 2 H2O. It catalyses the reaction (8Z,11Z,14Z)-eicosatrienoyl-CoA + 2 Fe(II)-[cytochrome b5] + O2 + 2 H(+) = (8Z,11Z,14Z,17Z)-eicosatetraenoyl-CoA + 2 Fe(III)-[cytochrome b5] + 2 H2O. The enzyme catalyses (5Z,8Z,11Z,14Z)-eicosatetraenoyl-CoA + 2 Fe(II)-[cytochrome b5] + O2 + 2 H(+) = (5Z,8Z,11Z,14Z,17Z)-eicosapentaenoyl-CoA + 2 Fe(III)-[cytochrome b5] + 2 H2O. It carries out the reaction (7Z,10Z,13Z,16Z)-docosatetraenoyl-CoA + 2 Fe(II)-[cytochrome b5] + O2 + 2 H(+) = (7Z,10Z,13Z,16Z,19Z)-docosapentaenoyl-CoA + 2 Fe(III)-[cytochrome b5] + 2 H2O. The catalysed reaction is (6Z,9Z,12Z)-octadecatrienoyl-CoA + 2 Fe(II)-[cytochrome b5] + O2 + 2 H(+) = (6Z,9Z,12Z,15Z)-octadecatetraenoyl-CoA + 2 Fe(III)-[cytochrome b5] + 2 H2O. It participates in lipid metabolism; polyunsaturated fatty acid biosynthesis. Omega-3 fatty acid desaturase that recognizes a range of 18- and 20-carbon omega-6 substrates. Introduces a double bond in the fatty acid chain three carbons away from terminal methyl group to biosynthesize n-3 (omega-3) polyunsaturated fatty acids (PUFAs) endogenously (PUFAs are essential for membrane structure and many cellular and physiological processes). Acts on a number of substrates like linoleoyl-CoA ((9Z,12Z)-octadecadienoyl-CoA, 18:2n-6), dihomo-gamma-linolenoyl-CoA ((8Z,11Z,14Z)-eicosatrienoyl-CoA, 20:3n-6), and arachidonoyl-CoA ((5Z,8Z,11Z,14Z)-eicosatetraenoyl-CoA, 20:4n-6), to generate alpha-linolenoyl-CoA ((9Z,12Z,15Z)-octadecatrienoyl-CoA, 18:3n-3), (8Z,11Z,14Z,17Z)-eicosatetraenoyl-CoA (20:4n-3) and (5Z,8Z,11Z,14Z,17Z)-eicosapentaenoyl-CoA (20:5n-3) respectively. Unlike plants, Caenorhabditis elegans desaturases seem to use fatty acyl-CoAs as substrates. The sequence is that of Omega-3 fatty acid desaturase fat-1 (fat-1) from Caenorhabditis elegans.